The following is a 362-amino-acid chain: Uracil-DNA glycosylase (362 aa).

A disordered region spans residues 28 to 97; the sequence is ASVAPNDPTE…AGPTEDPNFA (70 aa). The active-site Proton acceptor is the D205.

The protein belongs to the uracil-DNA glycosylase (UDG) superfamily. UNG family.

Its subcellular location is the host nucleus. The catalysed reaction is Hydrolyzes single-stranded DNA or mismatched double-stranded DNA and polynucleotides, releasing free uracil.. Its function is as follows. Excises uracil residues from the DNA which can arise as a result of misincorporation of dUMP residues by DNA polymerase or deamination of cytosines. Therefore may reduce deleterious uracil incorporation into the viral genome, particularly in terminally differentiated cells which lack DNA repair enzymes. The chain is Uracil-DNA glycosylase (UL2) from Psittacid herpesvirus 1 (isolate Amazon parrot/-/97-0001/1997) (PsHV-1).